The primary structure comprises 257 residues: Triosephosphate isomerase (257 aa).

Substrate-binding residues include asparagine 12 and lysine 14. Catalysis depends on histidine 98, which acts as the Electrophile. The Proton acceptor role is filled by glutamate 169.

This sequence belongs to the triosephosphate isomerase family. As to quaternary structure, homodimer.

The enzyme catalyses D-glyceraldehyde 3-phosphate = dihydroxyacetone phosphate. Its pathway is carbohydrate biosynthesis; gluconeogenesis. It functions in the pathway carbohydrate degradation; glycolysis; D-glyceraldehyde 3-phosphate from glycerone phosphate: step 1/1. The sequence is that of Triosephosphate isomerase (tpiA) from Dictyostelium discoideum (Social amoeba).